Consider the following 298-residue polypeptide: MALLTPQGVKEVFQFQKPQGRQHLRRLLNWEEFDELRDARQSILLDTLYDSVIFAVGKGFPWVEVVQVVKFTEELLKETKGCSITEAVTILGKKLRDYQKQFNVTHLLALCDYSHNTFIRHYRLYQYVLSQDQEVNLTVAHEQICAPPQPLPLTDGTDRDVWRHEQQVAELSTAEVEKRANVLMLKETLRMEQAQMLQKAFGVEEAPGQLQPHPTLRKEALERLVSEAIHIQIACLQELLQYEIQAAFDILDLRLQKKTLSLSAPPPPLPCITTGPAALEDSPKASKANKGKKAKAKK.

Positions 264–298 (APPPPLPCITTGPAALEDSPKASKANKGKKAKAKK) are disordered. The span at 287 to 298 (KANKGKKAKAKK) shows a compositional bias: basic residues.

This is an uncharacterized protein from Mus musculus (Mouse).